We begin with the raw amino-acid sequence, 499 residues long: Thioredoxin reductase 1, cytoplasmic (499 aa).

FAD-binding positions include 18–23, 42–43, 58–59, and 63–67; these read IGGGSG, DF, TC, and GCIPK. A disulfide bond links cysteine 59 and cysteine 64. Lysine 68 is modified (N6-succinyllysine). A Phosphotyrosine modification is found at tyrosine 131. Residues 131–132 and threonine 161 each bind FAD; that span reads YG. Residues arginine 166, 198 to 204, 221 to 222, arginine 226, 226 to 228, 291 to 293, and lysine 315 contribute to the NADP(+) site; these read ASYVALE, RS, RGF, and VGR. Tyrosine 200 contacts FAD. FAD is bound by residues aspartate 334, 341–343, and histidine 472; that span reads ELT. Residue glutamate 341 participates in NADP(+) binding. Catalysis depends on histidine 472, which acts as the Proton acceptor. Residues 497 to 498 constitute a cross-link (cysteinyl-selenocysteine (Cys-Sec)); the sequence is CU. Selenocysteine 498 is a non-standard amino acid (selenocysteine).

It belongs to the class-I pyridine nucleotide-disulfide oxidoreductase family. Homodimer. It depends on FAD as a cofactor. ISGylated.

The protein localises to the cytoplasm. It carries out the reaction [thioredoxin]-dithiol + NADP(+) = [thioredoxin]-disulfide + NADPH + H(+). It catalyses the reaction H2O2 + NADPH + H(+) = NADP(+) + 2 H2O. Reduces disulfideprotein thioredoxin (Trx) to its dithiol-containing form. Homodimeric flavoprotein involved in the regulation of cellular redox reactions, growth and differentiation. Contains a selenocysteine residue at the C-terminal active site that is essential for catalysis. Also has reductase activity on hydrogen peroxide (H2O2). In Rattus norvegicus (Rat), this protein is Thioredoxin reductase 1, cytoplasmic.